Here is a 356-residue protein sequence, read N- to C-terminus: MLIKINSNDIWLPIHFYDETFNFQLVLSIVELFSYLICAYILTLNIYIILKIKMFHRNLYILAIPLFGIWFELIIGKLITIAYRLKILNPGFELGVHIEIWTSDPTRKLKVESVNGLELLIFGGFLQWHYMFTIIFGVLAIAVERVVASVLIENYESNTQLFIPLFLTVISQFLSISTSLALLFQKVGPFLAQLPWIICCPFSAMAYFFVKKCNESFEREIRNPRRRRHFSVSQQFQVKENLRALYLGTRLVFVVLSCIALCGIGITALFYDLIPPFCCHFVENFLFLHPYLSCLTAIFSVPQWKNEFREVSVLGRCLKIGRLKIESENAMEIQDSTKKMGTETDLYFQQLADSWI.

The next 7 membrane-spanning stretches (helical) occupy residues 29–49, 61–81, 119–139, 161–181, 190–210, 251–271, and 281–301; these read IVEL…IYII, ILAI…LITI, LLIF…FGVL, LFIP…TSLA, FLAQ…YFFV, LVFV…ALFY, and FVEN…IFSV.

Belongs to the nematode receptor-like protein sre family.

The protein localises to the membrane. The chain is Serpentine receptor class epsilon-29 (sre-29) from Caenorhabditis elegans.